Consider the following 899-residue polypeptide: Putative lipoxygenase 5 (899 aa).

3 disordered regions span residues 15-34 (AGSR…RSTA), 48-68 (APVE…SVAA), and 258-291 (VASA…SAES). A PLAT domain is found at 68–204 (ARAVVTVRRR…VSRDRRVFFS (137 aa)). Positions 207–899 (PYLPSETPPG…CRGVPNSVTI (693 aa)) constitute a Lipoxygenase domain. Fe cation-binding residues include His-559, His-564, His-751, Asn-755, and Ile-899.

Belongs to the lipoxygenase family. The cofactor is Fe cation.

It carries out the reaction (9Z,12Z)-octadecadienoate + O2 = (13S)-hydroperoxy-(9Z,11E)-octadecadienoate. It catalyses the reaction (9Z,12Z,15Z)-octadecatrienoate + O2 = (13S)-hydroperoxy-(9Z,11E,15Z)-octadecatrienoate. It participates in lipid metabolism; oxylipin biosynthesis. In terms of biological role, plant lipoxygenase may be involved in a number of diverse aspects of plant physiology including growth and development, pest resistance, and senescence or responses to wounding. Catalyzes the hydroperoxidation of lipids containing a cis,cis-1,4-pentadiene structure. This chain is Putative lipoxygenase 5, found in Oryza sativa subsp. japonica (Rice).